The chain runs to 194 residues: Large ribosomal subunit protein eL15 (194 aa).

The interval Ala164 to Arg194 is disordered. Residues Arg166–Gly175 are compositionally biased toward basic residues.

This sequence belongs to the eukaryotic ribosomal protein eL15 family.

The chain is Large ribosomal subunit protein eL15 (rpl15e) from Archaeoglobus fulgidus (strain ATCC 49558 / DSM 4304 / JCM 9628 / NBRC 100126 / VC-16).